The sequence spans 241 residues: 2-C-methyl-D-erythritol 4-phosphate cytidylyltransferase (241 aa).

It belongs to the IspD/TarI cytidylyltransferase family. IspD subfamily.

It catalyses the reaction 2-C-methyl-D-erythritol 4-phosphate + CTP + H(+) = 4-CDP-2-C-methyl-D-erythritol + diphosphate. Its pathway is isoprenoid biosynthesis; isopentenyl diphosphate biosynthesis via DXP pathway; isopentenyl diphosphate from 1-deoxy-D-xylulose 5-phosphate: step 2/6. Catalyzes the formation of 4-diphosphocytidyl-2-C-methyl-D-erythritol from CTP and 2-C-methyl-D-erythritol 4-phosphate (MEP). The polypeptide is 2-C-methyl-D-erythritol 4-phosphate cytidylyltransferase (Hahella chejuensis (strain KCTC 2396)).